The primary structure comprises 352 residues: Selenide, water dikinase (352 aa).

Cys-23 is a catalytic residue. ATP is bound by residues Lys-26 and 54-56 (SRD). Asp-57 is a Mg(2+) binding site. Residues Asp-74, Asp-97, and 145 to 147 (GHS) each bind ATP. Mg(2+) is bound at residue Asp-97. Asp-233 contributes to the Mg(2+) binding site.

This sequence belongs to the selenophosphate synthase 1 family. Class I subfamily. In terms of assembly, homodimer. It depends on Mg(2+) as a cofactor.

The catalysed reaction is hydrogenselenide + ATP + H2O = selenophosphate + AMP + phosphate + 2 H(+). Its function is as follows. Synthesizes selenophosphate from selenide and ATP. The sequence is that of Selenide, water dikinase from Shewanella putrefaciens (strain CN-32 / ATCC BAA-453).